The sequence spans 554 residues: CTP synthase (554 aa).

The interval 1 to 265 (MTPLIFVTGG…DELVIEQFKL (265 aa)) is amidoligase domain. Ser13 contacts CTP. A UTP-binding site is contributed by Ser13. Residues 14–19 (SLGKGI) and Asp71 contribute to the ATP site. Asp71 and Glu139 together coordinate Mg(2+). CTP is bound by residues 146–148 (DIE), 186–191 (KTKPTQ), and Lys222. Residues 186 to 191 (KTKPTQ) and Lys222 contribute to the UTP site. A Glutamine amidotransferase type-1 domain is found at 292–545 (NIAVVGKYVD…VRAAREKKAG (254 aa)). Gly353 serves as a coordination point for L-glutamine. The active-site Nucleophile; for glutamine hydrolysis is the Cys380. L-glutamine-binding positions include 381 to 384 (YGMQ), Glu404, and Arg471. Active-site residues include His518 and Glu520.

The protein belongs to the CTP synthase family. In terms of assembly, homotetramer.

It catalyses the reaction UTP + L-glutamine + ATP + H2O = CTP + L-glutamate + ADP + phosphate + 2 H(+). The enzyme catalyses L-glutamine + H2O = L-glutamate + NH4(+). It carries out the reaction UTP + NH4(+) + ATP = CTP + ADP + phosphate + 2 H(+). The protein operates within pyrimidine metabolism; CTP biosynthesis via de novo pathway; CTP from UDP: step 2/2. With respect to regulation, allosterically activated by GTP, when glutamine is the substrate; GTP has no effect on the reaction when ammonia is the substrate. The allosteric effector GTP functions by stabilizing the protein conformation that binds the tetrahedral intermediate(s) formed during glutamine hydrolysis. Inhibited by the product CTP, via allosteric rather than competitive inhibition. Catalyzes the ATP-dependent amination of UTP to CTP with either L-glutamine or ammonia as the source of nitrogen. Regulates intracellular CTP levels through interactions with the four ribonucleotide triphosphates. This chain is CTP synthase, found in Xanthomonas euvesicatoria pv. vesicatoria (strain 85-10) (Xanthomonas campestris pv. vesicatoria).